Reading from the N-terminus, the 421-residue chain is Gamma-glutamyl phosphate reductase (421 aa).

This sequence belongs to the gamma-glutamyl phosphate reductase family.

The protein localises to the cytoplasm. The catalysed reaction is L-glutamate 5-semialdehyde + phosphate + NADP(+) = L-glutamyl 5-phosphate + NADPH + H(+). The protein operates within amino-acid biosynthesis; L-proline biosynthesis; L-glutamate 5-semialdehyde from L-glutamate: step 2/2. Functionally, catalyzes the NADPH-dependent reduction of L-glutamate 5-phosphate into L-glutamate 5-semialdehyde and phosphate. The product spontaneously undergoes cyclization to form 1-pyrroline-5-carboxylate. This chain is Gamma-glutamyl phosphate reductase, found in Pseudomonas savastanoi pv. phaseolicola (strain 1448A / Race 6) (Pseudomonas syringae pv. phaseolicola (strain 1448A / Race 6)).